The chain runs to 165 residues: Protein AIG2 C (165 aa).

14–19 (YGSILE) lines the substrate pocket. Glu82 acts as the Proton acceptor in catalysis.

It belongs to the gamma-glutamylcyclotransferase family. As to expression, expressed in floral organs, leaves, stems and roots.

Functionally, putative gamma-glutamylcyclotransferase. This is Protein AIG2 C from Arabidopsis thaliana (Mouse-ear cress).